The sequence spans 266 residues: Undecaprenyl-diphosphatase (266 aa).

The next 7 membrane-spanning stretches (helical) occupy residues 39–59 (PGSS…VWYF), 86–106 (SIFI…LFVP), 112–132 (VLRS…FMYL), 153–173 (LIGF…GITI), 189–209 (FSFL…FIFS), 216–236 (IGFL…LLAI), and 246–266 (NGLK…LLNL).

It belongs to the UppP family.

The protein resides in the cell inner membrane. The enzyme catalyses di-trans,octa-cis-undecaprenyl diphosphate + H2O = di-trans,octa-cis-undecaprenyl phosphate + phosphate + H(+). In terms of biological role, catalyzes the dephosphorylation of undecaprenyl diphosphate (UPP). Confers resistance to bacitracin. The protein is Undecaprenyl-diphosphatase of Prochlorococcus marinus (strain MIT 9215).